The chain runs to 87 residues: UPF0175 protein AF_0597 (87 aa).

Belongs to the UPF0175 family.

The polypeptide is UPF0175 protein AF_0597 (Archaeoglobus fulgidus (strain ATCC 49558 / DSM 4304 / JCM 9628 / NBRC 100126 / VC-16)).